A 77-amino-acid polypeptide reads, in one-letter code: Serine protease inhibitor 3 (77 aa).

The N-terminal stretch at Met1 to Ala17 is a signal peptide. 4 cysteine pairs are disulfide-bonded: Cys21/Cys53, Cys30/Cys48, Cys33/Cys44, and Cys55/Cys68. The TIL domain occupies Cys21–Cys74.

The protein localises to the secreted. Defends the organism against the host's proteinases. The chain is Serine protease inhibitor 3 from Anisakis simplex (Herring worm).